We begin with the raw amino-acid sequence, 650 residues long: DNA mismatch repair protein MutL (650 aa).

Disordered regions lie at residues 358–392 and 408–448; these read EASQ…QPLV and QPRP…QSAA. Positions 367–384 are enriched in pro residues; it reads TPQPRPALTPGHPDPPPQ. A compositionally biased stretch (low complexity) spans 430–444; it reads PYAPIAAAPVPASEP.

This sequence belongs to the DNA mismatch repair MutL/HexB family.

Functionally, this protein is involved in the repair of mismatches in DNA. It is required for dam-dependent methyl-directed DNA mismatch repair. May act as a 'molecular matchmaker', a protein that promotes the formation of a stable complex between two or more DNA-binding proteins in an ATP-dependent manner without itself being part of a final effector complex. In Geobacter sp. (strain M21), this protein is DNA mismatch repair protein MutL.